The sequence spans 617 residues: Dihydroxy-acid dehydratase (617 aa).

Mg(2+) is bound at residue Asp81. Residue Cys122 participates in [2Fe-2S] cluster binding. Positions 123 and 124 each coordinate Mg(2+). Lys124 bears the N6-carboxylysine mark. Cys195 provides a ligand contact to [2Fe-2S] cluster. Glu491 is a binding site for Mg(2+). Ser517 acts as the Proton acceptor in catalysis.

This sequence belongs to the IlvD/Edd family. In terms of assembly, homodimer. The cofactor is [2Fe-2S] cluster. Mg(2+) is required as a cofactor.

The catalysed reaction is (2R)-2,3-dihydroxy-3-methylbutanoate = 3-methyl-2-oxobutanoate + H2O. The enzyme catalyses (2R,3R)-2,3-dihydroxy-3-methylpentanoate = (S)-3-methyl-2-oxopentanoate + H2O. It functions in the pathway amino-acid biosynthesis; L-isoleucine biosynthesis; L-isoleucine from 2-oxobutanoate: step 3/4. It participates in amino-acid biosynthesis; L-valine biosynthesis; L-valine from pyruvate: step 3/4. Its function is as follows. Functions in the biosynthesis of branched-chain amino acids. Catalyzes the dehydration of (2R,3R)-2,3-dihydroxy-3-methylpentanoate (2,3-dihydroxy-3-methylvalerate) into 2-oxo-3-methylpentanoate (2-oxo-3-methylvalerate) and of (2R)-2,3-dihydroxy-3-methylbutanoate (2,3-dihydroxyisovalerate) into 2-oxo-3-methylbutanoate (2-oxoisovalerate), the penultimate precursor to L-isoleucine and L-valine, respectively. The polypeptide is Dihydroxy-acid dehydratase (Buchnera aphidicola subsp. Diuraphis noxia).